The sequence spans 466 residues: Asparagine--tRNA ligase (466 aa).

The protein belongs to the class-II aminoacyl-tRNA synthetase family. In terms of assembly, homodimer.

Its subcellular location is the cytoplasm. It carries out the reaction tRNA(Asn) + L-asparagine + ATP = L-asparaginyl-tRNA(Asn) + AMP + diphosphate + H(+). The chain is Asparagine--tRNA ligase from Myxococcus xanthus (strain DK1622).